Here is a 377-residue protein sequence, read N- to C-terminus: DNA replication and repair protein RecF (377 aa).

Residue 30–37 (GNNGSGKS) coordinates ATP.

The protein belongs to the RecF family.

Its subcellular location is the cytoplasm. In terms of biological role, the RecF protein is involved in DNA metabolism; it is required for DNA replication and normal SOS inducibility. RecF binds preferentially to single-stranded, linear DNA. It also seems to bind ATP. The chain is DNA replication and repair protein RecF from Colwellia psychrerythraea (strain 34H / ATCC BAA-681) (Vibrio psychroerythus).